The primary structure comprises 452 residues: tRNA modification GTPase MnmE (452 aa).

3 residues coordinate (6S)-5-formyl-5,6,7,8-tetrahydrofolate: Arg21, Glu78, and Lys118. Residues 214 to 375 (GMKVVIAGRP…LRDHLKQAMG (162 aa)) enclose the TrmE-type G domain. Asn224 is a K(+) binding site. GTP contacts are provided by residues 224-229 (NAGKSS), 243-249 (TDIAGTT), and 268-271 (DTAG). Ser228 is a Mg(2+) binding site. K(+) contacts are provided by Thr243, Ile245, and Thr248. Thr249 contacts Mg(2+). Residue Lys452 coordinates (6S)-5-formyl-5,6,7,8-tetrahydrofolate.

Belongs to the TRAFAC class TrmE-Era-EngA-EngB-Septin-like GTPase superfamily. TrmE GTPase family. Homodimer. Heterotetramer of two MnmE and two MnmG subunits. K(+) is required as a cofactor.

It is found in the cytoplasm. In terms of biological role, exhibits a very high intrinsic GTPase hydrolysis rate. Involved in the addition of a carboxymethylaminomethyl (cmnm) group at the wobble position (U34) of certain tRNAs, forming tRNA-cmnm(5)s(2)U34. The chain is tRNA modification GTPase MnmE from Haemophilus influenzae (strain 86-028NP).